A 129-amino-acid polypeptide reads, in one-letter code: Cortical cell-delineating protein (129 aa).

Positions 1–19 (MAPKVALFLALSLLFAATA) form a signal peptide, or 21. Asparagine 25 carries N-linked (GlcNAc...) asparagine glycosylation. 2 consecutive repeat copies span residues 29 to 34 (PVVPTP) and 35 to 40 (PVVPTP). The interval 29 to 40 (PVVPTPPVVPTP) is 2 X 6 AA tandem repeats of P-V-V-P-T-P.

It to carrot DC2.15 and PEMB3. As to expression, cortical ground meristem of developing roots.

Functionally, delineates a novel subset of developing cortical cells. It is probably involved in some aspect of transport of molecules to or from the vasculature. The sequence is that of Cortical cell-delineating protein from Zea mays (Maize).